A 621-amino-acid polypeptide reads, in one-letter code: Archaeal Lon protease (621 aa).

The Cytoplasmic portion of the chain corresponds to 1 to 117; that stretch reads MNEEVREILG…YKEEAMKKAQ (117 aa). 54 to 61 contacts ATP; sequence GSPGTGKS. A helical membrane pass occupies residues 118–136; that stretch reads ARNFLIFTLVFLVIGYTVL. At 137–141 the chain is on the extracellular side; the sequence is TNPGN. Residues 142–160 traverse the membrane as a helical segment; that stretch reads LIWGIIAAVLILMMSRYFI. Residues 161–621 lie on the Cytoplasmic side of the membrane; the sequence is PREDRNVPKL…KFKELELAAV (461 aa). Residues 423–602 enclose the Lon proteolytic domain; sequence GYEVGRVNGL…NEVLEHVLED (180 aa). Active-site residues include Ser509 and Lys552.

Belongs to the peptidase S16 family. Archaeal LonB subfamily. Homohexamer. Organized in a ring with a central cavity.

It localises to the cell membrane. In terms of biological role, ATP-dependent serine protease that mediates the selective degradation of mutant and abnormal proteins as well as certain short-lived regulatory proteins. Degrades polypeptides processively. This Archaeoglobus fulgidus (strain ATCC 49558 / DSM 4304 / JCM 9628 / NBRC 100126 / VC-16) protein is Archaeal Lon protease.